The primary structure comprises 148 residues: Large ribosomal subunit protein bL9 (148 aa).

It belongs to the bacterial ribosomal protein bL9 family.

Binds to the 23S rRNA. The chain is Large ribosomal subunit protein bL9 from Caldicellulosiruptor bescii (strain ATCC BAA-1888 / DSM 6725 / KCTC 15123 / Z-1320) (Anaerocellum thermophilum).